We begin with the raw amino-acid sequence, 199 residues long: Holliday junction branch migration complex subunit RuvA (199 aa).

The domain I stretch occupies residues 1–64; it reads MIALLTGRLA…EDSISLFGFR (64 aa). Residues 65 to 143 form a domain II region; the sequence is TLAEKEFFQL…KMDVAPSAQE (79 aa). The interval 144–154 is flexible linker; that stretch reads APSSEAPAEVA. Residues 154 to 199 are domain III; that stretch reads ADDVASALVNLGYKEAVVRKVLAEMSIEPDASTEAVLRQALKVLMK.

It belongs to the RuvA family. Homotetramer. Forms an RuvA(8)-RuvB(12)-Holliday junction (HJ) complex. HJ DNA is sandwiched between 2 RuvA tetramers; dsDNA enters through RuvA and exits via RuvB. An RuvB hexamer assembles on each DNA strand where it exits the tetramer. Each RuvB hexamer is contacted by two RuvA subunits (via domain III) on 2 adjacent RuvB subunits; this complex drives branch migration. In the full resolvosome a probable DNA-RuvA(4)-RuvB(12)-RuvC(2) complex forms which resolves the HJ.

Its subcellular location is the cytoplasm. In terms of biological role, the RuvA-RuvB-RuvC complex processes Holliday junction (HJ) DNA during genetic recombination and DNA repair, while the RuvA-RuvB complex plays an important role in the rescue of blocked DNA replication forks via replication fork reversal (RFR). RuvA specifically binds to HJ cruciform DNA, conferring on it an open structure. The RuvB hexamer acts as an ATP-dependent pump, pulling dsDNA into and through the RuvAB complex. HJ branch migration allows RuvC to scan DNA until it finds its consensus sequence, where it cleaves and resolves the cruciform DNA. This chain is Holliday junction branch migration complex subunit RuvA, found in Geobacter sulfurreducens (strain ATCC 51573 / DSM 12127 / PCA).